The following is a 501-amino-acid chain: Mitochondrial inner membrane i-AAA protease supercomplex subunit MGR3 (501 aa).

Residues 1–77 are Mitochondrial matrix-facing; it reads MLLQGMRLSQ…PKPNLKKKNR (77 aa). Residues 39-72 form a disordered region; it reads RPPASNFNTQESAPIPESPANSPTRPQMAPKPNL. Residues 78-95 form a helical membrane-spanning segment; sequence SLMYSIIGVSIVGLYFWF. Residues 96–501 lie on the Mitochondrial intermembrane side of the membrane; it reads KSNSRKQKLP…LKAAKKEGLN (406 aa). TPR repeat units follow at residues 109–144, 154–187, 386–420, and 440–473; these read QKVWKEAIWQESDKMDFNYKEALRRYIEALDECDRS, TRIELKIAEMYEKLNMLEEAQNLYQELLSRFFEA, GTYIKAVRFVRKNRDLCLERAQKCYDSVIAFAKRN, and ALSTYGMGVLSLHEGVLAKAEKLFKDSITMAKET.

This sequence belongs to the MGR3 family. As to quaternary structure, component of the mitochondrial inner membrane i-AAA protease supercomplex composed of MGR1, MGR3 and YME1. With MGR1, forms a subcomplex that binds to YME1 and to substrates to facilitate proteolysis.

The protein resides in the mitochondrion inner membrane. Component of the mitochondrial inner membrane i-AAA protease supercomplex, which degrades misfolded mitochondrial proteins. Together with MGR1, functions in an adapter complex that targets substrates to the i-AAA protease for degradation. Required for growth of cells lacking the mitochondrial genome. The chain is Mitochondrial inner membrane i-AAA protease supercomplex subunit MGR3 (MGR3) from Saccharomyces cerevisiae (strain ATCC 204508 / S288c) (Baker's yeast).